Consider the following 197-residue polypeptide: Cytochrome c oxidase polypeptide 5, mitochondrial (197 aa).

The N-terminal 13 residues, 1–13 (MFLRSVTRAAARS), are a transit peptide targeting the mitochondrion. The Mitochondrial matrix segment spans residues 14 to 129 (SAVPTTGLRS…KGENLKIFFK (116 aa)). The chain crosses the membrane as a helical span at residues 130–147 (VAQLTLVSFGIFYVIHLF). At 148-197 (AKPQPKTMTKEWQEASNEYAKQEKINPIYGISAEGYEGKGFVQSPPAEKQ) the chain is on the mitochondrial intermembrane side.

It belongs to the cytochrome c oxidase IV family. Component of the cytochrome c oxidase (complex IV, CIV), a multisubunit enzyme composed of a catalytic core of 3 subunits and seevral supernumerary subunits. The complex exists as a monomer or a dimer and forms supercomplexes (SCs) in the inner mitochondrial membrane with ubiquinol-cytochrome c oxidoreductase (cytochrome b-c1 complex, complex III, CIII).

Its subcellular location is the mitochondrion inner membrane. It participates in energy metabolism; oxidative phosphorylation. In terms of biological role, component of the cytochrome c oxidase, the last enzyme in the mitochondrial electron transport chain which drives oxidative phosphorylation. The respiratory chain contains 3 multisubunit complexes succinate dehydrogenase (complex II, CII), ubiquinol-cytochrome c oxidoreductase (cytochrome b-c1 complex, complex III, CIII) and cytochrome c oxidase (complex IV, CIV), that cooperate to transfer electrons derived from NADH and succinate to molecular oxygen, creating an electrochemical gradient over the inner membrane that drives transmembrane transport and the ATP synthase. Cytochrome c oxidase is the component of the respiratory chain that catalyzes the reduction of oxygen to water. Electrons originating from reduced cytochrome c in the intermembrane space (IMS) are transferred via the dinuclear copper A center (CU(A)) of subunit 2 and heme A of subunit 1 to the active site in subunit 1, a binuclear center (BNC) formed by heme A3 and copper B (CU(B)). The BNC reduces molecular oxygen to 2 water molecules using 4 electrons from cytochrome c in the IMS and 4 protons from the mitochondrial matrix. In Aspergillus niger, this protein is Cytochrome c oxidase polypeptide 5, mitochondrial (cox5).